A 948-amino-acid polypeptide reads, in one-letter code: P cell-type agglutination protein map4 (948 aa).

Positions 1 to 23 (MNSYAILLSLFFSFERLLTLANA) are cleaved as a signal peptide. 3 N-linked (GlcNAc...) asparagine glycosylation sites follow: asparagine 31, asparagine 32, and asparagine 57. Disordered regions lie at residues 136–174 (IPRG…IGTG) and 253–333 (FYET…PTTY). Over residues 149 to 174 (PTYSASDSSATTITSSSPSTSIIGTG) the composition is skewed to low complexity. The span at 253-264 (FYETKSSTSSVP) shows a compositional bias: polar residues. The segment covering 265 to 332 (TQTIDSSSFT…PSLSSALPTT (68 aa)) has biased composition (low complexity). N-linked (GlcNAc...) asparagine glycosylation occurs at asparagine 383. A disordered region spans residues 408–432 (LTSSTKKIPSTTLPTSSKMITTTTP). Asparagine 436, asparagine 469, asparagine 491, asparagine 522, asparagine 553, asparagine 568, and asparagine 598 each carry an N-linked (GlcNAc...) asparagine glycan. 5 tandem repeats follow at residues 617–652 (SYVT…IPTP), 653–688 (SWVT…IPTP), 689–724 (SWVT…IPTP), 725–760 (SWVT…IPTP), and 761–796 (SWVT…VPTP). The tract at residues 617–796 (SYVTETTTSG…GTVLIDVPTP (180 aa)) is 5 X 36 AA approximate tandem repeats. In terms of domain architecture, DIPSY spans 796–948 (PTASSSPFPS…ANVVLRALEY (153 aa)). Residue asparagine 921 is glycosylated (N-linked (GlcNAc...) asparagine).

The protein belongs to the mam3/map4 family.

It is found in the cell surface. In terms of biological role, p cell-type specific protein which involved in agglutination during conjugation. This chain is P cell-type agglutination protein map4, found in Schizosaccharomyces pombe (strain 972 / ATCC 24843) (Fission yeast).